Consider the following 234-residue polypeptide: Ribosomal RNA large subunit methyltransferase E (234 aa).

A disordered region spans residues 1 to 37 (MSDDDRRRWKGPGPERQDSGRRSTERKVIARNARTES). Positions 91, 93, 109, 125, and 149 each coordinate S-adenosyl-L-methionine. Catalysis depends on Lys-189, which acts as the Proton acceptor.

The protein belongs to the class I-like SAM-binding methyltransferase superfamily. RNA methyltransferase RlmE family.

The protein localises to the cytoplasm. The enzyme catalyses uridine(2552) in 23S rRNA + S-adenosyl-L-methionine = 2'-O-methyluridine(2552) in 23S rRNA + S-adenosyl-L-homocysteine + H(+). Specifically methylates the uridine in position 2552 of 23S rRNA at the 2'-O position of the ribose in the fully assembled 50S ribosomal subunit. In Hyphomonas neptunium (strain ATCC 15444), this protein is Ribosomal RNA large subunit methyltransferase E.